The following is a 555-amino-acid chain: Formate--tetrahydrofolate ligase (555 aa).

Residue 64-71 coordinates ATP; it reads TPAGEGKT.

It belongs to the formate--tetrahydrofolate ligase family.

It catalyses the reaction (6S)-5,6,7,8-tetrahydrofolate + formate + ATP = (6R)-10-formyltetrahydrofolate + ADP + phosphate. The protein operates within one-carbon metabolism; tetrahydrofolate interconversion. This is Formate--tetrahydrofolate ligase from Dinoroseobacter shibae (strain DSM 16493 / NCIMB 14021 / DFL 12).